The primary structure comprises 250 residues: MPASPLRLGVNVDHVATLRNARGGRNPDPVRAALLAIEAGADGITAHLREDRRHIRDEDMARLKAEISKPLNFEMAATDDMMRISLATRPHAVCLVPERRQEVTTEGGLDVVGQHNALAPYIARLNDAGIRVSLFIAADPAQIEMAARLRAPVIEIHTGAWCDAVVDGHTEKADAEWKRIVAGAKLAKDAGLEVHAGHGLDYATAETIAALPDIMELNIGYYMIGEALFVGLAETVRSMRAAMDRGRSRA.

Asparagine 11 lines the 3-amino-2-oxopropyl phosphate pocket. 13 to 14 (DH) contacts 1-deoxy-D-xylulose 5-phosphate. Arginine 22 contacts 3-amino-2-oxopropyl phosphate. The active-site Proton acceptor is histidine 47. 1-deoxy-D-xylulose 5-phosphate is bound by residues arginine 49 and histidine 54. Glutamate 74 acts as the Proton acceptor in catalysis. Threonine 104 lines the 1-deoxy-D-xylulose 5-phosphate pocket. Histidine 198 acts as the Proton donor in catalysis. 3-amino-2-oxopropyl phosphate is bound by residues glycine 199 and 220–221 (GY).

It belongs to the PNP synthase family. In terms of assembly, homooctamer; tetramer of dimers.

The protein localises to the cytoplasm. The catalysed reaction is 3-amino-2-oxopropyl phosphate + 1-deoxy-D-xylulose 5-phosphate = pyridoxine 5'-phosphate + phosphate + 2 H2O + H(+). It participates in cofactor biosynthesis; pyridoxine 5'-phosphate biosynthesis; pyridoxine 5'-phosphate from D-erythrose 4-phosphate: step 5/5. In terms of biological role, catalyzes the complicated ring closure reaction between the two acyclic compounds 1-deoxy-D-xylulose-5-phosphate (DXP) and 3-amino-2-oxopropyl phosphate (1-amino-acetone-3-phosphate or AAP) to form pyridoxine 5'-phosphate (PNP) and inorganic phosphate. The polypeptide is Pyridoxine 5'-phosphate synthase (Bradyrhizobium diazoefficiens (strain JCM 10833 / BCRC 13528 / IAM 13628 / NBRC 14792 / USDA 110)).